The following is a 306-amino-acid chain: UDP-3-O-acyl-N-acetylglucosamine deacetylase (306 aa).

3 residues coordinate Zn(2+): histidine 79, histidine 238, and aspartate 242. Histidine 265 serves as the catalytic Proton donor.

This sequence belongs to the LpxC family. Zn(2+) serves as cofactor.

It catalyses the reaction a UDP-3-O-[(3R)-3-hydroxyacyl]-N-acetyl-alpha-D-glucosamine + H2O = a UDP-3-O-[(3R)-3-hydroxyacyl]-alpha-D-glucosamine + acetate. The protein operates within glycolipid biosynthesis; lipid IV(A) biosynthesis; lipid IV(A) from (3R)-3-hydroxytetradecanoyl-[acyl-carrier-protein] and UDP-N-acetyl-alpha-D-glucosamine: step 2/6. Its function is as follows. Catalyzes the hydrolysis of UDP-3-O-myristoyl-N-acetylglucosamine to form UDP-3-O-myristoylglucosamine and acetate, the committed step in lipid A biosynthesis. The sequence is that of UDP-3-O-acyl-N-acetylglucosamine deacetylase from Shewanella frigidimarina (strain NCIMB 400).